The chain runs to 90 residues: Probable Fe(2+)-trafficking protein (90 aa).

The protein belongs to the Fe(2+)-trafficking protein family.

Its function is as follows. Could be a mediator in iron transactions between iron acquisition and iron-requiring processes, such as synthesis and/or repair of Fe-S clusters in biosynthetic enzymes. The chain is Probable Fe(2+)-trafficking protein from Chromohalobacter salexigens (strain ATCC BAA-138 / DSM 3043 / CIP 106854 / NCIMB 13768 / 1H11).